The sequence spans 302 residues: Epoxyqueuosine reductase (302 aa).

The active-site Proton donor is the Asp-128. Positions 170-202 constitute a 4Fe-4S ferredoxin-type 1 domain; sequence LPLQADGPIRDYCGTCTACIDACPTDAITPYEV. [4Fe-4S] cluster contacts are provided by Cys-182, Cys-185, Cys-188, Cys-192, Cys-207, Cys-234, Cys-237, and Cys-241. The region spanning 221-251 is the 4Fe-4S ferredoxin-type 2 domain; sequence NEFKGKMENWIFGCDICQDVCPWNSFARPHS.

It belongs to the QueG family. As to quaternary structure, monomer. It depends on cob(II)alamin as a cofactor. [4Fe-4S] cluster is required as a cofactor.

Its subcellular location is the cytoplasm. It catalyses the reaction epoxyqueuosine(34) in tRNA + AH2 = queuosine(34) in tRNA + A + H2O. The protein operates within tRNA modification; tRNA-queuosine biosynthesis. Functionally, catalyzes the conversion of epoxyqueuosine (oQ) to queuosine (Q), which is a hypermodified base found in the wobble positions of tRNA(Asp), tRNA(Asn), tRNA(His) and tRNA(Tyr). The chain is Epoxyqueuosine reductase from Leadbetterella byssophila (strain DSM 17132 / JCM 16389 / KACC 11308 / NBRC 106382 / 4M15).